A 181-amino-acid polypeptide reads, in one-letter code: Peptide deformylase (181 aa).

2 residues coordinate Fe cation: C99 and H141. E142 is an active-site residue. Residue H145 participates in Fe cation binding.

Belongs to the polypeptide deformylase family. Fe(2+) serves as cofactor.

It carries out the reaction N-terminal N-formyl-L-methionyl-[peptide] + H2O = N-terminal L-methionyl-[peptide] + formate. Functionally, removes the formyl group from the N-terminal Met of newly synthesized proteins. Requires at least a dipeptide for an efficient rate of reaction. N-terminal L-methionine is a prerequisite for activity but the enzyme has broad specificity at other positions. The protein is Peptide deformylase of Chlamydia trachomatis serovar A (strain ATCC VR-571B / DSM 19440 / HAR-13).